Reading from the N-terminus, the 165-residue chain is Cell division protein SepF (165 aa).

Residues 23 to 75 (DEYGDYAGDYETQETAPVATRSSKRESRPAPVSDLSERRRPASGPTGVVAELS) form a disordered region.

Belongs to the SepF family. In terms of assembly, homodimer. Interacts with FtsZ.

It is found in the cytoplasm. Its function is as follows. Cell division protein that is part of the divisome complex and is recruited early to the Z-ring. Probably stimulates Z-ring formation, perhaps through the cross-linking of FtsZ protofilaments. Its function overlaps with FtsA. This Nocardioides sp. (strain ATCC BAA-499 / JS614) protein is Cell division protein SepF.